We begin with the raw amino-acid sequence, 312 residues long: Malate dehydrogenase (312 aa).

Residues 7-12 and D32 contribute to the NAD(+) site; that span reads GAGNVG. Residues R82 and R88 each contribute to the substrate site. NAD(+)-binding positions include N95 and 118-120; that span reads VSN. N120 and R151 together coordinate substrate. Residue H175 is the Proton acceptor of the active site.

The protein belongs to the LDH/MDH superfamily. MDH type 3 family.

The catalysed reaction is (S)-malate + NAD(+) = oxaloacetate + NADH + H(+). In terms of biological role, catalyzes the reversible oxidation of malate to oxaloacetate. The protein is Malate dehydrogenase of Cytophaga hutchinsonii (strain ATCC 33406 / DSM 1761 / CIP 103989 / NBRC 15051 / NCIMB 9469 / D465).